Consider the following 1017-residue polypeptide: Centriole and centriolar satellite protein OFD1 (1017 aa).

One can recognise a LisH domain in the interval 69 to 101; the sequence is LIGASNSLVADHLQRCGYEYSLSVFFPESGLAK. Coiled coils occupy residues 188-557 and 626-659; these read PHRS…ENEV and EFIA…RATQ. Positions 609 to 666 are mediates homooligomerization; it reads PPYVNTATEASSPESDFEFIASSTKAKVRELEQEAERLEKAFRTYYQRATQNPSTSPQ. 4 disordered regions span residues 657-676, 685-705, 721-749, and 769-801; these read ATQN…SVNS, SSSM…QPLG, GSVV…RSLD, and LDRV…SFSG. Residues serine 664, serine 670, serine 687, serine 722, serine 737, serine 747, serine 791, and serine 823 each carry the phosphoserine modification. Low complexity predominate over residues 722–740; sequence SVVSRPRRTSSSTRLSSTP. A coiled-coil region spans residues 895–966; the sequence is ELHMKERRQR…AHCENTLEKY (72 aa). Residues 897–988 show a composition bias toward basic and acidic residues; sequence HMKERRQREE…ADKSSKKSGK (92 aa). Positions 897 to 1017 are disordered; it reads HMKERRQREE…FSHEEPDDMW (121 aa).

The protein belongs to the OFD1 family. As to quaternary structure, homooligomer. Interacts with LCA5. Interacts with RUVBL1; the interaction is direct and may mediate interaction with the NuA4 histone acetyltransferase complex. Interacts with SDCCAG8; the interaction is direct. Interacts with MAP1LC3B. Interacts with C2CD3; OFD1 may act as a negative regulator of C2CD3. Forms a complex with KIAA0753/OFIP and CEP20/FOR20; the interaction with CEP20 is detected only in the presence of KIAA0753. Interacts with PCM1; this interaction may be mediated by KIAA0753/OFIP. Interacts with TBC1D31; regulates OFD1 activity in cilium assembly. Post-translationally, phosphorylated. Phosphorylation at Ser-737, by the cAMP-dependent protein kinase PKA, triggers ubiquitination and proteasomal degradation of OFD1. Also increases its interaction with TBC1D31 and regulates its function in ciliogenesis. In terms of processing, ubiquitinated by PJA2, upon phosphorylation at Ser-737 by PKA, leads to the proteasomal degradation of OFD1.

It is found in the cytoplasm. The protein resides in the cytoskeleton. It localises to the microtubule organizing center. Its subcellular location is the centrosome. The protein localises to the centriole. It is found in the centriolar satellite. The protein resides in the cilium basal body. It localises to the nucleus. Component of the centrioles controlling mother and daughter centrioles length. Recruits to the centriole IFT88 and centriole distal appendage-specific proteins including CEP164. Involved in the biogenesis of the cilium, a centriole-associated function. The cilium is a cell surface projection found in many vertebrate cells required to transduce signals important for development and tissue homeostasis. Plays an important role in development by regulating Wnt signaling and the specification of the left-right axis. Only OFD1 localized at the centriolar satellites is removed by autophagy, which is an important step in the ciliogenesis regulation. The chain is Centriole and centriolar satellite protein OFD1 (Ofd1) from Mus musculus (Mouse).